Consider the following 154-residue polypeptide: Protein X (154 aa).

Positions Pro68 to Phe117 are mitochondrial targeting sequence.

Belongs to the orthohepadnavirus protein X family. As to quaternary structure, may form homodimer. May interact with host CEBPA, CFLAR, CREB1, DDB1, E4F1, HBXIP, HSPD1/HSP60, NFKBIA, POLR2E and SMAD4. Interacts with host SMC5-SMC6 complex and induces its degradation. Interacts with host TRPC4AP; leading to prevent ubiquitination of TRPC4AP. Interacts with host PLSCR1; this interaction promotes ubiquitination and degradation of HBx and impairs HBx-mediated cell proliferation. A fraction may be phosphorylated in insect cells and HepG2 cells, a human hepatoblastoma cell line. Phosphorylated in vitro by host protein kinase C or mitogen-activated protein kinase. N-acetylated in insect cells.

The protein resides in the host cytoplasm. It localises to the host nucleus. The protein localises to the host mitochondrion. Functionally, multifunctional protein that plays a role in silencing host antiviral defenses and promoting viral transcription. Does not seem to be essential for HBV infection. May be directly involved in development of cirrhosis and liver cancer (hepatocellular carcinoma). Most of cytosolic activities involve modulation of cytosolic calcium. The effect on apoptosis is controversial depending on the cell types in which the studies have been conducted. May induce apoptosis by localizing in mitochondria and causing loss of mitochondrial membrane potential. May also modulate apoptosis by binding host CFLAR, a key regulator of the death-inducing signaling complex (DISC). Promotes viral transcription by using the host E3 ubiquitin ligase DDB1 to target the SMC5-SMC6 complex to proteasomal degradation. This host complex would otherwise bind to viral episomal DNA, and prevents its transcription. Moderately stimulates transcription of many different viral and cellular transcription elements. Promoters and enhancers stimulated by HBx contain DNA binding sites for NF-kappa-B, AP-1, AP-2, c-EBP, ATF/CREB, or the calcium-activated factor NF-AT. The chain is Protein X from Hepatitis B virus genotype D subtype ayw (isolate France/Tiollais/1979) (HBV-D).